Here is a 159-residue protein sequence, read N- to C-terminus: Growth arrest and DNA damage-inducible protein GADD45 gamma (159 aa).

A homodimerization region spans residues 43–86 (VYESAKVLNVDPDNVTFCVLAADEEDEGDIALQIHFTLIQAFCC).

The protein belongs to the GADD45 family. In terms of assembly, undergoes concentration-dependent homodimerization, which is required for growth inhibititory activity and enhances interaction with PCNA. Interacts with GADD45GIP1. Interacts with PCNA.

Functionally, involved in the regulation of growth and apoptosis. Mediates activation of stress-responsive MTK1/MEKK4 MAPKKK. This Mus musculus (Mouse) protein is Growth arrest and DNA damage-inducible protein GADD45 gamma (Gadd45g).